The sequence spans 157 residues: GDP-mannose mannosyl hydrolase (157 aa).

Substrate is bound by residues 2–3 (FL), phenylalanine 8, and arginine 36. The Nudix hydrolase domain maps to 3–153 (LRQEDFAAVV…SRAYFSPDAP (151 aa)). Mg(2+) is bound by residues glycine 49, glutamate 69, and glutamine 122. The short motif at 50 to 71 (GRVCKDETLEAAFARLTQAELG) is the Nudix box element.

The protein belongs to the Nudix hydrolase family. In terms of assembly, homodimer. Mg(2+) is required as a cofactor.

The enzyme catalyses GDP-alpha-D-mannose + H2O = D-mannose + GDP + H(+). Its function is as follows. Hydrolyzes GDP-mannose. The sequence is that of GDP-mannose mannosyl hydrolase from Salmonella typhi.